A 105-amino-acid polypeptide reads, in one-letter code: Met repressor (105 aa).

It belongs to the MetJ family. In terms of assembly, homodimer.

The protein localises to the cytoplasm. Its function is as follows. This regulatory protein, when combined with SAM (S-adenosylmethionine) represses the expression of the methionine regulon and of enzymes involved in SAM synthesis. This Yersinia pestis bv. Antiqua (strain Antiqua) protein is Met repressor.